A 193-amino-acid polypeptide reads, in one-letter code: Protein PrsJ (193 aa).

An N-terminal signal peptide occupies residues 1-27 (MVVNKTTAVLYLIALSLSGFIHTFLRA).

Its subcellular location is the periplasm. In terms of biological role, this protein maintains pilus integrity and thus is an important participant in pilus assembly. It may function as molecular chaperone directly or indirectly in the correct assembly of PapA subunits. The sequence is that of Protein PrsJ (prsJ) from Escherichia coli.